The chain runs to 116 residues: Large ribosomal subunit protein bL21c (116 aa).

This sequence belongs to the bacterial ribosomal protein bL21 family. In terms of assembly, part of the 50S ribosomal subunit.

The protein resides in the plastid. It is found in the chloroplast. Its function is as follows. This protein binds to 23S rRNA. The protein is Large ribosomal subunit protein bL21c of Emiliania huxleyi (Coccolithophore).